Reading from the N-terminus, the 130-residue chain is Small ribosomal subunit protein uS8 (130 aa).

This sequence belongs to the universal ribosomal protein uS8 family. As to quaternary structure, part of the 30S ribosomal subunit. Contacts proteins S5 and S12.

One of the primary rRNA binding proteins, it binds directly to 16S rRNA central domain where it helps coordinate assembly of the platform of the 30S subunit. The sequence is that of Small ribosomal subunit protein uS8 from Aliivibrio fischeri (strain MJ11) (Vibrio fischeri).